Reading from the N-terminus, the 134-residue chain is Interleukin-5 (134 aa).

Positions 1-21 are cleaved as a signal peptide; that stretch reads MRMHLHLTLVALGAAYVCANA. N-linked (GlcNAc...) asparagine glycosylation is found at Asn-76 and Asn-90.

Belongs to the IL-5 family. Homodimer; disulfide-linked. Interacts with IL5RA. Interacts with CSF2RB.

The protein localises to the secreted. Functionally, homodimeric cytokine expressed predominantly by T-lymphocytes and NK cells that plays an important role in the survival, differentiation, and chemotaxis of eosinophils. Also acts on activated and resting B-cells to induce immunoglobulin production, growth, and differentiation. Mechanistically, exerts its biological effects through a receptor composed of IL5RA subunit and the cytokine receptor common subunit beta/CSF2RB. Binding to the receptor leads to activation of various kinases including LYN, SYK and JAK2 and thereby propagates signals through the RAS-MAPK and JAK-STAT5 pathways respectively. This chain is Interleukin-5 (IL5), found in Bos taurus (Bovine).